Consider the following 361-residue polypeptide: Phosphoserine aminotransferase (361 aa).

An L-glutamate-binding site is contributed by arginine 42. Pyridoxal 5'-phosphate contacts are provided by residues 76–77 (AT), tryptophan 102, threonine 152, aspartate 172, and glutamine 195. Lysine 196 carries the N6-(pyridoxal phosphate)lysine modification. Residue 237-238 (NT) participates in pyridoxal 5'-phosphate binding.

The protein belongs to the class-V pyridoxal-phosphate-dependent aminotransferase family. SerC subfamily. As to quaternary structure, homodimer. It depends on pyridoxal 5'-phosphate as a cofactor.

Its subcellular location is the cytoplasm. The catalysed reaction is O-phospho-L-serine + 2-oxoglutarate = 3-phosphooxypyruvate + L-glutamate. It catalyses the reaction 4-(phosphooxy)-L-threonine + 2-oxoglutarate = (R)-3-hydroxy-2-oxo-4-phosphooxybutanoate + L-glutamate. The protein operates within amino-acid biosynthesis; L-serine biosynthesis; L-serine from 3-phospho-D-glycerate: step 2/3. It participates in cofactor biosynthesis; pyridoxine 5'-phosphate biosynthesis; pyridoxine 5'-phosphate from D-erythrose 4-phosphate: step 3/5. In terms of biological role, catalyzes the reversible conversion of 3-phosphohydroxypyruvate to phosphoserine and of 3-hydroxy-2-oxo-4-phosphonooxybutanoate to phosphohydroxythreonine. This chain is Phosphoserine aminotransferase, found in Stenotrophomonas maltophilia (strain R551-3).